Consider the following 62-residue polypeptide: Bowman-Birk type proteinase inhibitor (62 aa).

7 disulfide bridges follow: C8/C61, C9/C24, C12/C57, C14/C22, C31/C38, C35/C50, and C40/C48.

As to quaternary structure, forms a monomer at protein concentrations of below 1 mM. At concentrations of above 2 mM, self-associates.

Inhibits trypsin but not chymotrypsin. Inhibits the trypsin-like proteinase activity present in larvae of the crop pests Adoxophyes orana, Hyphantria cunea, Lobesia botrana and Ostrinia nubilalis. This Medicago scutellata (Snail medic) protein is Bowman-Birk type proteinase inhibitor.